A 613-amino-acid polypeptide reads, in one-letter code: MSSSESASSDEETKRRAPATSDSDSDSDAGPKPGKPLSTDSSASDSDAEKPQAKPAKKKTLTKRKRRATGSSDDDQVDDDLFADKEDKARWKKLTELEKEQEIFERMEARENAIAREEIAQQLAKKAKKSSEKGVKTEKRRKMNSGGSDAGSPKRKASSDSDSEMDAAFHRPSDINRKHKEKNAMDALKNKRKEIEKKNAKNEALSIDAVFGANSGSSSSSSSSESSRSSSSSRESSPERVSEKDKIVKKDVDGLSELRRARLSRHKLSLMIHAPFFDSTVVGCYVRLGQGQMSGSGSKYRIWKIVGVEESNKVYELEGKKTNKIIKCQNGGSERPFRMQFVSNADFEQIEFDEWLLACKRHGNLPTVDIMDKKKQDIEKAINHKYSDKEVDLMIKEKSKYQTVPRNFAMTKANWSKQKELAQQRGDIREAEQIQTKIDEIERQADELEKERSKSISAIAFINHRNRSKIKDQVLSGQLKIEENSQDDPFTRKKGGMRVVSGSKSRLDGTLSASSSTTNLSDGGKDKSSSLAKPTQPPPSTQIKKKTDISSLHDFDLDIDLGKLKDFSTPESSGNKRPSISSSKGVSLSDYRMRRSGGGDAGSSTSAAPSSAV.

Disordered regions lie at residues Met1–Arg90 and Gln121–Ile247. Basic residues predominate over residues Pro55 to Ala68. The segment covering Ser72–Leu81 has biased composition (acidic residues). The span at Ala167 to Asn176 shows a compositional bias: basic and acidic residues. The stretch at Ile175–Ala209 forms a coiled coil. Low complexity predominate over residues Ser215–Glu235. Positions Ser236–Ile247 are enriched in basic and acidic residues. One can recognise a Plus3 domain in the interval Val252–Asn383. A coiled-coil region spans residues Arg425–Ile462. 2 disordered regions span residues Ser485–Ile549 and Leu564–Val613. A compositionally biased stretch (low complexity) spans Thr510–Ser521. Over residues Thr569–Val586 the composition is skewed to polar residues. The segment covering Gly602–Val613 has biased composition (low complexity).

Component of the PAF1 complex which consists of at least cdc-73, ctr-9, leo-1, pafo-1 and rtfo-1.

Its subcellular location is the nucleus. Component of the PAF1 complex which is a multifunctional complex involved in transcription initiation via genetic interactions with TATA-binding proteins, elongation and transcription-coupled histone modification. The protein is RNA polymerase-associated protein RTF1 homolog of Caenorhabditis elegans.